The following is a 338-amino-acid chain: Popeye domain-containing protein 1-A (338 aa).

At M1–H40 the chain is on the extracellular side. N-linked (GlcNAc...) asparagine glycosylation is found at N21 and N29. Residues H41 to L61 traverse the membrane as a helical segment. Residues N62–M65 lie on the Cytoplasmic side of the membrane. Residues L66–F86 form a helical membrane-spanning segment. The Extracellular portion of the chain corresponds to R87–D91. The helical transmembrane segment at I92–Y112 threads the bilayer. At K113 to C338 the chain is on the cytoplasmic side. Residues T296–R317 form a disordered region. Polar residues predominate over residues L307–R317.

It belongs to the popeye family. As to expression, expressed in the heart.

It localises to the lateral cell membrane. Its subcellular location is the cell junction. The protein localises to the tight junction. It is found in the membrane. In terms of biological role, cell adhesion molecule involved in the establishment and/or maintenance of cell integrity. Plays a role in vamp3-mediated vesicular transport and recycling of different receptor molecules. May be involved in the formation and regulation of the tight junction (TJ) paracellular permeability barrier in epithelial cells. May induce primordial adhesive contact and aggregation of epithelial cells in a Ca(2+)-independent manner. May be involved in epithelial movement during corneal sheet formation and regeneration. May play a role in the regulation of cell shape and movement by modulating the Rho-GTPase activity. May also be involved in striated muscle regeneration and in the regulation of cell spreading. The sequence is that of Popeye domain-containing protein 1-A (popdc1-a) from Xenopus laevis (African clawed frog).